Here is a 288-residue protein sequence, read N- to C-terminus: Structure-specific endonuclease subunit SLX1 (288 aa).

The GIY-YIG domain maps to 7–90 (PFYGVYLLQS…QHPNMTRLIT (84 aa)).

The protein belongs to the SLX1 family. Forms a heterodimer with SLX4. It depends on a divalent metal cation as a cofactor.

The protein resides in the nucleus. Its function is as follows. Catalytic subunit of the SLX1-SLX4 structure-specific endonuclease that resolves DNA secondary structures generated during DNA repair and recombination. Has endonuclease activity towards branched DNA substrates, introducing single-strand cuts in duplex DNA close to junctions with ss-DNA. This is Structure-specific endonuclease subunit SLX1 from Yarrowia lipolytica (strain CLIB 122 / E 150) (Yeast).